The sequence spans 155 residues: Ribosomal RNA large subunit methyltransferase H (155 aa).

Residues leucine 72, glycine 104, and leucine 123–leucine 128 contribute to the S-adenosyl-L-methionine site.

This sequence belongs to the RNA methyltransferase RlmH family. Homodimer.

The protein localises to the cytoplasm. The catalysed reaction is pseudouridine(1915) in 23S rRNA + S-adenosyl-L-methionine = N(3)-methylpseudouridine(1915) in 23S rRNA + S-adenosyl-L-homocysteine + H(+). In terms of biological role, specifically methylates the pseudouridine at position 1915 (m3Psi1915) in 23S rRNA. This chain is Ribosomal RNA large subunit methyltransferase H, found in Mycoplasma capricolum subsp. capricolum (strain California kid / ATCC 27343 / NCTC 10154).